Reading from the N-terminus, the 915-residue chain is Probable inorganic carbon transporter subunit DabA (915 aa).

4 residues coordinate Zn(2+): Cys392, Asp394, His566, and Cys581.

It belongs to the inorganic carbon transporter (TC 9.A.2) DabA family. As to quaternary structure, forms a complex with DabB. Requires Zn(2+) as cofactor.

The protein resides in the cell inner membrane. Its function is as follows. Part of an energy-coupled inorganic carbon pump. The chain is Probable inorganic carbon transporter subunit DabA from Nitrosospira multiformis (strain ATCC 25196 / NCIMB 11849 / C 71).